The sequence spans 224 residues: Urease accessory protein UreF (224 aa).

It belongs to the UreF family. UreD, UreF and UreG form a complex that acts as a GTP-hydrolysis-dependent molecular chaperone, activating the urease apoprotein by helping to assemble the nickel containing metallocenter of UreC. The UreE protein probably delivers the nickel.

Its subcellular location is the cytoplasm. Functionally, required for maturation of urease via the functional incorporation of the urease nickel metallocenter. This Klebsiella pneumoniae subsp. pneumoniae (strain ATCC 700721 / MGH 78578) protein is Urease accessory protein UreF.